We begin with the raw amino-acid sequence, 871 residues long: Leucine--tRNA ligase (871 aa).

The 'HIGH' region signature appears at P43–H53. Positions K629–S633 match the 'KMSKS' region motif. K632 serves as a coordination point for ATP.

It belongs to the class-I aminoacyl-tRNA synthetase family.

The protein localises to the cytoplasm. It catalyses the reaction tRNA(Leu) + L-leucine + ATP = L-leucyl-tRNA(Leu) + AMP + diphosphate. This is Leucine--tRNA ligase from Chelativorans sp. (strain BNC1).